Consider the following 205-residue polypeptide: Glycerol-3-phosphate acyltransferase (205 aa).

5 consecutive transmembrane segments (helical) span residues 3-23 (VFAL…SAIL), 53-73 (GVAA…VWLA), 80-100 (PFYL…PVFF), 112-132 (LGAI…TWLL), and 138-158 (GYSS…VWWF).

This sequence belongs to the PlsY family. As to quaternary structure, probably interacts with PlsX.

Its subcellular location is the cell inner membrane. It catalyses the reaction an acyl phosphate + sn-glycerol 3-phosphate = a 1-acyl-sn-glycero-3-phosphate + phosphate. Its pathway is lipid metabolism; phospholipid metabolism. In terms of biological role, catalyzes the transfer of an acyl group from acyl-phosphate (acyl-PO(4)) to glycerol-3-phosphate (G3P) to form lysophosphatidic acid (LPA). This enzyme utilizes acyl-phosphate as fatty acyl donor, but not acyl-CoA or acyl-ACP. The protein is Glycerol-3-phosphate acyltransferase of Erwinia tasmaniensis (strain DSM 17950 / CFBP 7177 / CIP 109463 / NCPPB 4357 / Et1/99).